We begin with the raw amino-acid sequence, 59 residues long: Large ribosomal subunit protein bL32 (59 aa).

The span at Met-1 to Arg-16 shows a compositional bias: basic residues. Positions Met-1–Asp-20 are disordered.

This sequence belongs to the bacterial ribosomal protein bL32 family.

This Novosphingobium aromaticivorans (strain ATCC 700278 / DSM 12444 / CCUG 56034 / CIP 105152 / NBRC 16084 / F199) protein is Large ribosomal subunit protein bL32.